We begin with the raw amino-acid sequence, 260 residues long: Cytochrome c oxidase subunit 2 (260 aa).

The Mitochondrial intermembrane portion of the chain corresponds to 1–41; that stretch reads MIVREWLFFTMAPCDAAEPWQLGFQDAATPMMQGIIDLHHD. Residues 42 to 58 form a helical membrane-spanning segment; sequence IFFFLILILVFVSWILV. The Mitochondrial matrix portion of the chain corresponds to 59–82; the sequence is RALWHFHYKKNPIPQRIVHGTTIE. The helical transmembrane segment at 83 to 104 threads the bilayer; that stretch reads IIRTIFPSIILMFIAIPSFALL. Residues 105-260 are Mitochondrial intermembrane-facing; that stretch reads YSMDEVVVDP…NQLIPQTGEA (156 aa). Cu cation-binding residues include H187, C222, E224, C226, H230, and M233. A Mg(2+)-binding site is contributed by E224.

It belongs to the cytochrome c oxidase subunit 2 family. As to quaternary structure, component of the cytochrome c oxidase (complex IV, CIV), a multisubunit enzyme composed of a catalytic core of 3 subunits and several supernumerary subunits. The complex exists as a monomer or a dimer and forms supercomplexes (SCs) in the inner mitochondrial membrane with ubiquinol-cytochrome c oxidoreductase (cytochrome b-c1 complex, complex III, CIII). Cu cation serves as cofactor.

Its subcellular location is the mitochondrion inner membrane. It carries out the reaction 4 Fe(II)-[cytochrome c] + O2 + 8 H(+)(in) = 4 Fe(III)-[cytochrome c] + 2 H2O + 4 H(+)(out). In terms of biological role, component of the cytochrome c oxidase, the last enzyme in the mitochondrial electron transport chain which drives oxidative phosphorylation. The respiratory chain contains 3 multisubunit complexes succinate dehydrogenase (complex II, CII), ubiquinol-cytochrome c oxidoreductase (cytochrome b-c1 complex, complex III, CIII) and cytochrome c oxidase (complex IV, CIV), that cooperate to transfer electrons derived from NADH and succinate to molecular oxygen, creating an electrochemical gradient over the inner membrane that drives transmembrane transport and the ATP synthase. Cytochrome c oxidase is the component of the respiratory chain that catalyzes the reduction of oxygen to water. Electrons originating from reduced cytochrome c in the intermembrane space (IMS) are transferred via the dinuclear copper A center (CU(A)) of subunit 2 and heme A of subunit 1 to the active site in subunit 1, a binuclear center (BNC) formed by heme A3 and copper B (CU(B)). The BNC reduces molecular oxygen to 2 water molecules using 4 electrons from cytochrome c in the IMS and 4 protons from the mitochondrial matrix. This Beta vulgaris (Sugar beet) protein is Cytochrome c oxidase subunit 2 (COX2).